A 539-amino-acid chain; its full sequence is Cytochrome P450 monooxygenase tenB (539 aa).

Residues 13-33 (LGYYEKVAGVLGFLSIALLFW) traverse the membrane as a helical segment. Positions 439-460 (PFRFSRASKDDDDDGKSTSSHA) are disordered. Cys-481 is a heme binding site.

The protein belongs to the cytochrome P450 family. Heme serves as cofactor.

The protein localises to the membrane. The protein operates within secondary metabolite biosynthesis. Its function is as follows. Cytochrome P450 monooxygenase; part of the gene cluster that mediates the biosynthesis of tenellin-type 2-pyridones, iron-chelating compounds involved in iron stress tolerance, competition with the natural competitor fungus Metarhizium robertsii and insect hosts infection. TenB catalyzes the selective N-hydroxylation of the 2-pyridone nitrogen of yield tellinin and 15-hydroxytellenin (15-HT), respectively. The pathway begins with the assembly of the polyketide-amino acid backbone by the hybrid PKS-NRPS tenS with the help of the enoyl reductase tenC. These enzymes catalyze the synthesis of the pyrrolidine-2-dione intermediates pretellinin A, 11-hydropretellenin A, 12-hydropretellenin A, 13-hydropretellenin A, 14-hydropretellenin A, 12-oxopretellenin A and prototellinin D. The cytochrome P450 monooxygenase tenA then catalyzes an oxidative ring expansion of pretenellin A and 14-hydropretellenin A to form the 2-pyridone core, leading to pretenellin B and pyridovericin, respectively. The cytochrome P450 monooxygenase tenB is then required for the selective N-hydroxylation of the 2-pyridone nitrogen of yield tellinin and 15-hydroxytellenin (15-HT), respectively. The UDP-glucosyltransferase GT1 and the methyltransferase MT1, located outside the tenS gene cluster, contribute to the stepwise glycosylation and methylation of 15-HT to obtain the glycoside pyridovericin-N-O-(4-O-methyl-beta-D-glucopyranoside) (PMGP). Additional related compounds such as 1-O-methyl-15-HT, (8Z)-1-O-methyl-15-HT, and O-methyltenellin A are also produced but the enzymes involved in their biosynthesis have still to be determined. The sequence is that of Cytochrome P450 monooxygenase tenB from Beauveria bassiana (White muscardine disease fungus).